Consider the following 586-residue polypeptide: MDPGTLSLFQRVSTKLGWDRDGGLDDAEEKLRKSLKKTRRPALASSDSSTGPAQRLELSDSDNSSGKENRSQEEHILLTSDDEDFEKFLASKATPKSTFKQSASSAQKPREPVPVLSSESDNEFELFLNRVKTPKAKVQPQSMSSSDESLKHFIVDSMSSDDDFVTEKKPSIYKGKAKTVKTPKSVQKTKKPAPSLCNSPVFLSDSDDDCNIVIKSTWRTRHSRPPSDEHQATSKDREETEKPRVPQPTITVKSHTSRDDTCSSEEEFQSLLDRVRQNLGGRTSASPMPSAEPKPQRPCLSTPSATGRKTGSQVPVKDSPVIHTPVQQMPSSRPVLSHTEPRALPNSRVVVCKTPGCFLQSLSAPGSVYCRSFKQNKDELTSKLYQLYNTSVFDSQLPVDMSVTWNNKMRKTAGYCISGQERGTGKRYARIELSVKVCDSADRLRDTLIHEMCHAATWLINNVRDGHGPFWRLYARKAMLAHPELPMVSRCHSYDINYKFQYQCNRCKNTIGRHSKSLDTTKFVCALCTGQLVLLTPSKPRAPTPFATFVKENYGSTKQELTGQSHAEIMRKLSADFASKTRLSQS.

Disordered regions lie at residues 17–119 (GWDR…LSSE), 176–202 (KAKTVKTPKSVQKTKKPAPSLCNSPVF), 217–266 (TWRT…SSEE), and 279–318 (LGGRTSASPMPSAEPKPQRPCLSTPSATGRKTGSQVPVKD). Residues 65-76 (SGKENRSQEEHI) are compositionally biased toward basic and acidic residues. Polar residues predominate over residues 94-107 (TPKSTFKQSASSAQ). Residues 176–191 (KAKTVKTPKSVQKTKK) show a composition bias toward basic residues. Over residues 225-244 (PPSDEHQATSKDREETEKPR) the composition is skewed to basic and acidic residues. Positions 299 to 313 (CLSTPSATGRKTGSQ) are enriched in polar residues. The SprT-like domain occupies 383-482 (KLYQLYNTSV…LYARKAMLAH (100 aa)).

This sequence belongs to the serine-aspartate repeat-containing protein (SDr) family.

It is found in the nucleus. The protein localises to the PML body. Its subcellular location is the chromosome. In terms of biological role, may play a role in DNA-protein cross-links (DPCs) clearance, ensuring the genomic stability by protecting germ cells and early embryos from various sources of damage. This chain is Germ cell nuclear acidic protein (gcna), found in Danio rerio (Zebrafish).